A 67-amino-acid polypeptide reads, in one-letter code: Retron Se72 cold shock-like protein (67 aa).

A CSD domain is found at 1 to 66; it reads MENGFVNFYD…KGFKAVAIQK (66 aa).

Functionally, probable cold shock-like component of antiviral defense system retron Se72, composed of a non-coding RNA (ncRNA), a reverse transcriptase (RT) and this protein. Expression of retron Se72 confers protection against bacteriophage lambda. At multiplicity of infection (MOI) of 0.02 cultures slow growth when infected with lambda but do not collapse, at MOI 2 cultures enter growth stasis. This Salmonella heidelberg (strain 579083-10) protein is Retron Se72 cold shock-like protein.